Here is a 261-residue protein sequence, read N- to C-terminus: (R)-S-adenosyl-L-methionine hydrolase (261 aa).

D12, D72, and N187 together coordinate adenosine. (R)-S-adenosyl-L-methionine is bound by residues N187, S231, and V239. V239 contributes to the adenosine binding site.

Belongs to the SAM hydrolase / SAM-dependent halogenase family.

It carries out the reaction (R)-S-adenosyl-L-methionine + H2O = adenosine + L-methionine + H(+). Functionally, specifically hydrolyzes (R)-S-adenosyl-L-methionine ((R)-SAM), the inactive form of the ubiquitous cofactor SAM, into adenosine and L-methionine. Is stereoselective as it cannot use the active form of SAM, (S)-S-adenosyl-L-methionine, as substrate. Likely plays a role in preventing accumulation of (R)-S-adenosyl-L-methionine in cells; maintenance of (S)-S-denosyl-L-methionine homochirality is important for cellular health given that the (R)-form is largely inactive as a methyl donor and can function as an inhibitor of methyltransferases. This chain is (R)-S-adenosyl-L-methionine hydrolase, found in Salinispora tropica (strain ATCC BAA-916 / DSM 44818 / JCM 13857 / NBRC 105044 / CNB-440).